The sequence spans 526 residues: MAVHYNKILSAKAAVDCSIPVSVNASIKYADQQRREKLRKELARCEKEFKLSKSAMQTNSKMNSKFFVNSLQRPSGEPQDQDVLIEERLTRYPSFSKSLIPSPEGLHLSLPESNKILMNGTQKYPSTAPPRYSGCGHGYDRRPRSAHQFQVVISKTPSGDLLEKHADLFSNNQSPFTPRTLKTEAKSFLSQYRYYTPAKRRRDFSDQRMEAETQTELSSFNSELGTAEKKSSKDSDVSIKQAPNYMRNGAEDKIAPLSLQGQNLAWDKSKDGILQPSSERAPCTQFSPDSKIYSDEEELLYLSFMENVTDEILKLGLFSNRFLERLFERHIRKNKHHLEEGKMRYLLHGLKVDLGCISEEEQNSFRIFNEFHFQKALTSRENRFINDTEAVNHHERQQYQEALNMLSSVPKDENKMFSFPGEFLLPAHKVKHSEGVIVQQVNDETDFEALPWDGNNPSVSDSFIDQETSVDVIEGDSDFEMVETSRELCCLSTSLSPSVPLPSIEGGSNHDKELSTLKIMEMSIED.

The disordered stretch occupies residues 203–240 (DFSDQRMEAETQTELSSFNSELGTAEKKSSKDSDVSIK). A compositionally biased stretch (polar residues) spans 212–224 (ETQTELSSFNSEL). A compositionally biased stretch (basic and acidic residues) spans 226-237 (TAEKKSSKDSDV).

Found in a complex with CFAP410, NEK1 and SPATA7. Interacts with NEK1. Interacts with RPGRIP1. Interacts with RPGR. Interacts with NPHP4. Interacts with NPHP1. Interacts with AHI1. In terms of tissue distribution, in early prophase of primary spermatocytes.

It localises to the cytoplasm. It is found in the cytoskeleton. The protein resides in the cilium axoneme. The protein localises to the cilium basal body. Its subcellular location is the cell projection. It localises to the cilium. It is found in the photoreceptor outer segment. Functionally, involved in the maintenance of both rod and cone photoreceptor cells. Required for photoreceptor-specific localization of proximal connecting cilium (CC) proteins RPGR, AHI1, NPHP1, NPHP4, and RPGRIP1 at the distal CC, a photoreceptor-specific extension of the primary cilium transition zone. Maintenance of protein localization at the photoreceptor-specific distal CC is essential for normal microtubule stability and to prevent photoreceptor degeneration. The chain is Spermatogenesis-associated protein 7 homolog (Spata7) from Rattus norvegicus (Rat).